A 680-amino-acid chain; its full sequence is DNA ligase (680 aa).

NAD(+)-binding positions include D38 to D42, S87 to L88, and E119. The active-site N6-AMP-lysine intermediate is the K121. R142, E179, K296, and K320 together coordinate NAD(+). C414, C417, C432, and C438 together coordinate Zn(2+). The BRCT domain maps to I597–E680.

This sequence belongs to the NAD-dependent DNA ligase family. LigA subfamily. The cofactor is Mg(2+). Requires Mn(2+) as cofactor.

It catalyses the reaction NAD(+) + (deoxyribonucleotide)n-3'-hydroxyl + 5'-phospho-(deoxyribonucleotide)m = (deoxyribonucleotide)n+m + AMP + beta-nicotinamide D-nucleotide.. In terms of biological role, DNA ligase that catalyzes the formation of phosphodiester linkages between 5'-phosphoryl and 3'-hydroxyl groups in double-stranded DNA using NAD as a coenzyme and as the energy source for the reaction. It is essential for DNA replication and repair of damaged DNA. This is DNA ligase from Cellvibrio japonicus (strain Ueda107) (Pseudomonas fluorescens subsp. cellulosa).